We begin with the raw amino-acid sequence, 281 residues long: Bifunctional protein FolD (281 aa).

NADP(+)-binding positions include Gly-164–Ser-166, Ile-189, and Ile-230.

The protein belongs to the tetrahydrofolate dehydrogenase/cyclohydrolase family. In terms of assembly, homodimer.

The catalysed reaction is (6R)-5,10-methylene-5,6,7,8-tetrahydrofolate + NADP(+) = (6R)-5,10-methenyltetrahydrofolate + NADPH. It carries out the reaction (6R)-5,10-methenyltetrahydrofolate + H2O = (6R)-10-formyltetrahydrofolate + H(+). It functions in the pathway one-carbon metabolism; tetrahydrofolate interconversion. In terms of biological role, catalyzes the oxidation of 5,10-methylenetetrahydrofolate to 5,10-methenyltetrahydrofolate and then the hydrolysis of 5,10-methenyltetrahydrofolate to 10-formyltetrahydrofolate. This is Bifunctional protein FolD from Sulfurovum sp. (strain NBC37-1).